The following is a 96-amino-acid chain: Co-chaperonin GroES (96 aa).

It belongs to the GroES chaperonin family. In terms of assembly, heptamer of 7 subunits arranged in a ring. Interacts with the chaperonin GroEL.

It localises to the cytoplasm. In terms of biological role, together with the chaperonin GroEL, plays an essential role in assisting protein folding. The GroEL-GroES system forms a nano-cage that allows encapsulation of the non-native substrate proteins and provides a physical environment optimized to promote and accelerate protein folding. GroES binds to the apical surface of the GroEL ring, thereby capping the opening of the GroEL channel. The polypeptide is Co-chaperonin GroES (Wolbachia sp. subsp. Brugia malayi (strain TRS)).